The primary structure comprises 656 residues: MEELDGEPTVTLIPGVNSKKNQMYFDWGPGEMLVCETSFNKKEKSEMVPSCPFIYIIRKDVDVYSQILRKLFNESHGIFLGLQRIDEELTGKSRKSQLVRVSKNYRSVIRACMEEMHQVAIAAKDPANGRQFSSQVSILSAMELIWNLCEILFIEVAPAGPLLLHLLDWVRLHVCEVDSLSADVLGSENPSKHDSFWNLVTILVLQGRLDEARQMLSKEADASPASAGICRIMGDLMRTMPILSPGNTQTLTELELKWQHWHEECERYLQDSTFATSPHLESLLKIMLGDEAALLEQKELLSNWYHFLVTRLLYSNPTVKPIDLHYYAQSSLDLFLGGESSPEPLDNILLAAFEFDIHQVIKECSIALSNWWFVAHLTDLLDHCKLLQSHNLYFGSNMREFLLLEYASGLFAHPSLWQLGVDYFDYCPELGRVSLELHIERIPLNTEQKALKVLRICEQRQMTEQVRSICKILAMKAVRNNRLGSALSWSIRAKDAAFATLVSDRFLRDYCERGCFSDLDLIDNLGPAMMLSDRLTFLGKYREFHRMYGEKRFADAASLLLSLMTSRIAPRSFWMTLLTDALPLLEQKQVIFSAEQTYELMRCLEDLTSRRPVHGESDTEQLQDDDIETTKVEMLRLSLARNLARAIIREGSLEGS.

Position 1 is an N-acetylmethionine (methionine 1). Residue lysine 92 is modified to N6-acetyllysine. The residue at position 223 (serine 223) is a Phosphoserine.

This sequence belongs to the nucleoporin Nup85 family. Component of the nuclear pore complex (NPC). Component of the NPC Nup107-160 subcomplex, consisting of at least NUP107, NUP98/Nup96, NUP160, NUP133, NUP85, NUP37, NUP43 and SEC13. Interacts with NUP160, NUP133 and SEC13. Interacts with NUP37, NUP107 and NUP43. Interacts with CCR2.

It is found in the nucleus. It localises to the nuclear pore complex. The protein resides in the chromosome. Its subcellular location is the centromere. The protein localises to the kinetochore. It is found in the cytoplasm. It localises to the cytoskeleton. The protein resides in the spindle. Its subcellular location is the nucleus membrane. In terms of biological role, essential component of the nuclear pore complex (NPC) that seems to be required for NPC assembly and maintenance. As part of the NPC Nup107-160 subcomplex plays a role in RNA export and in tethering NUP96/Nup98 and NUP153 to the nucleus. The Nup107-160 complex seems to be required for spindle assembly during mitosis. NUP85 is required for membrane clustering of CCL2-activated CCR2. Seems to be involved in CCR2-mediated chemotaxis of monocytes and may link activated CCR2 to the phosphatidyl-inositol 3-kinase-Rac-lammellipodium protrusion cascade. Involved in nephrogenesis. The protein is Nuclear pore complex protein Nup85 (NUP85) of Homo sapiens (Human).